Here is a 1438-residue protein sequence, read N- to C-terminus: MGARASVLTGGKLDRWEKIYLRPGGKKKYMMKHLVWASRELERFACNPSLMETTEGCKQLLQQLEPALKTGSEGLRSLFNTIVVLWCVHQGIPVKDTKEALDQLQEAQQKGKQEVAAATADGTSTVSRNFPIVANAQGQMVHQPISPRTLNAWVKVVEEKAFSPEVIPMFMALSEGATPQDLNTMLNTVGGHQAAMQMLKEVINEEAAEWDRLHPVHAGPVPPGQMREPRGSDIAGTTSTIQEQVGWMTSNPPIPVGDIYKRWIILGLNKIVKMYCPVSILDIKQGPKESFRDYVDRFYKTLRAEQATQEVKNWMTDTLLVQNANPDCKSILRALGPGATLEGDEPAFQGVGGPSHKARVLAEAMSQAQHSNDAKRQFKGPKRIVKCFNCGKEGHIARNCKAPRRKGCWKCGQEGHQMRNCTNERQANFFRETLAFQQGKAREFPSEETRTNSSTNRELRVQGGGTCPEGGSEERGDREQAVSSANFPQISLWQRPVVTVRIEGQLKEALLDTGADDTVLEEIELGGRWKPKMIGGIGGFIKVRQYDNVTIDICGKRAVGTVLVGPTPVNIIGRNILTQIGCTLNFPISPIETVPVSLKPGMDGPRVKQWPLTEEKIRALTEICTEMEKEGKISRVGPENPYNTPIFAIKKKDSTKWRKLVDFRELNKRTQDFWEVQLGIPHPAGLKQKKSVTVLDVGDAYFSCPLDENFRKYTAFTIPSVNNETPGIRYQYNVLPQGWKGSPAIFQSSMTKILEPFRKQNPEIIIYQYMDDLYVGSDLKIELHREKVEELRAHLLKWGFTTPDKKHQKEPPFLWMGYELHPDKWTVQPIQLPEKESWTVNDIQKLIGKLNWACQIYPGIRVKQLCKLIRGTKALTEVVTFTTEAELELAENREILKEPVHGAYYDPSKELIAEIQKQGQGQWTYQIFQEQYKNLKTGKYARMRSAHTNDVKQLTEVVQKVALESIVIWGKVPRFRLPIQKETWEAWWTDYWQATWIPEWEYVNTPPLVKLWYQLEQDPIPGAETFYVDGAANRETKLGKAGYVTDKGRQKIISLTETTNQKAELQAIQLALQDSEVEVNIVTDSQYALGIIQGQPDTSESEIVNQIIEELIKKEKVYLSWVPAHKGIGGNEQIDKLVSSGIRKVLFLDGIDKAQEEHEKYHNNWRAMASDFNLPPIVAKEIVANCDKCQLKGEAIHGQVDCSPGIWQLDCTHLEGKIILVAVHVASGYMEAEVIPAETGQETAYFILKLAGRWPVKVIHTDNGSNFTSSTVKAACWWAGIQQEFGIPYNPQSQGVVESMNKELKKIIGQIRDQAEHLKTAVQMAVFIHNFKRKGGIGGYSAGERIIDILATDIQTTKLQQQISNIQKFRVYYRDSRDPIWKGPAKLLWKGEGAVVLQDQEEIKVVPRRKAKIIRDYGKQMAGDDCVASRQDENQNME.

Gly-2 carries the N-myristoyl glycine; by host lipid modification. The short motif at 16 to 22 (WEKIYLR) is the Nuclear export signal element. The short motif at 26–32 (KKKYMMK) is the Nuclear localization signal element. 2 CCHC-type zinc fingers span residues 385–402 (VKCF…NCKA) and 406–423 (KGCW…NCTN). The segment at 439-481 (GKAREFPSEETRTNSSTNRELRVQGGGTCPEGGSEERGDREQA) is disordered. Residues 440–450 (KAREFPSEETR) show a composition bias toward basic and acidic residues. One can recognise a Peptidase A2 domain in the interval 507-576 (KEALLDTGAD…TPVNIIGRNI (70 aa)). Catalysis depends on Asp-512, which acts as the For protease activity; shared with dimeric partner. Positions 630-820 (EGKISRVGPE…PPFLWMGYEL (191 aa)) constitute a Reverse transcriptase domain. Positions 696, 771, and 772 each coordinate Mg(2+). Residues 813-821 (FLWMGYELH) are RT 'primer grip'. The Tryptophan repeat motif signature appears at 984–1000 (WEAWWTDYWQATWIPEW). Residues 1020–1143 (IPGAETFYVD…IDKLVSSGIR (124 aa)) enclose the RNase H type-1 domain. Positions 1029, 1064, 1084, and 1135 each coordinate Mg(2+). The Integrase-type zinc-finger motif lies at 1149–1190 (DGIDKAQEEHEKYHNNWRAMASDFNLPPIVAKEIVANCDKCQ). Zn(2+) is bound by residues His-1158, His-1162, Cys-1186, and Cys-1189. The Integrase catalytic domain occupies 1200–1350 (VDCSPGIWQL…SAGERIIDIL (151 aa)). Residues Asp-1210 and Asp-1262 each contribute to the Mg(2+) site. The integrase-type DNA-binding region spans 1369 to 1416 (FRVYYRDSRDPIWKGPAKLLWKGEGAVVLQDQEEIKVVPRRKAKIIRD).

In terms of assembly, homotrimer. Interacts with gp41 (via C-terminus). As to quaternary structure, homodimer. The active site consists of two apposed aspartic acid residues. Heterodimer of p66 RT and p51 RT (RT p66/p51). Heterodimerization of RT is essential for DNA polymerase activity. Despite the sequence identities, p66 RT and p51 RT have distinct folding. In terms of assembly, homotetramer; may further associate as a homohexadecamer. The cofactor is Mg(2+). In terms of processing, specific enzymatic cleavages by the viral protease yield mature proteins. The protease is released by autocatalytic cleavage. The polyprotein is cleaved during and after budding, this process is termed maturation. Proteolytic cleavage of p66 RT removes the RNase H domain to yield the p51 RT subunit. Post-translationally, capsid protein p24 is phosphorylated.

It is found in the virion. The protein localises to the host nucleus. The protein resides in the host cytoplasm. Its subcellular location is the host cell membrane. The enzyme catalyses Specific for a P1 residue that is hydrophobic, and P1' variable, but often Pro.. It catalyses the reaction Endohydrolysis of RNA in RNA/DNA hybrids. Three different cleavage modes: 1. sequence-specific internal cleavage of RNA. Human immunodeficiency virus type 1 and Moloney murine leukemia virus enzymes prefer to cleave the RNA strand one nucleotide away from the RNA-DNA junction. 2. RNA 5'-end directed cleavage 13-19 nucleotides from the RNA end. 3. DNA 3'-end directed cleavage 15-20 nucleotides away from the primer terminus.. It carries out the reaction 3'-end directed exonucleolytic cleavage of viral RNA-DNA hybrid.. The catalysed reaction is DNA(n) + a 2'-deoxyribonucleoside 5'-triphosphate = DNA(n+1) + diphosphate. Its activity is regulated as follows. The viral protease is inhibited by many synthetic protease inhibitors (PIs), such as amprenavir, atazanavir, indinavir, loprinavir, nelfinavir, ritonavir and saquinavir. RT can be inhibited either by nucleoside RT inhibitors (NRTIs) or by non nucleoside RT inhibitors (NNRTIs). NRTIs act as chain terminators, whereas NNRTIs inhibit DNA polymerization by binding a small hydrophobic pocket near the RT active site and inducing an allosteric change in this region. Classical NRTIs are abacavir, adefovir (PMEA), didanosine (ddI), lamivudine (3TC), stavudine (d4T), tenofovir (PMPA), zalcitabine (ddC), and zidovudine (AZT). Classical NNRTIs are atevirdine (BHAP U-87201E), delavirdine, efavirenz (DMP-266), emivirine (I-EBU), and nevirapine (BI-RG-587). The tritherapies used as a basic effective treatment of AIDS associate two NRTIs and one NNRTI. Use of protease inhibitors in tritherapy regimens permit more ambitious therapeutic strategies. Its function is as follows. Gag-Pol polyprotein and Gag polyprotein may regulate their own translation, by the binding genomic RNA in the 5'-UTR. At low concentration, Gag-Pol and Gag would promote translation, whereas at high concentration, the polyproteins encapsidate genomic RNA and then shut off translation. Functionally, matrix protein p17 has two main functions: in infected cell, it targets Gag and Gag-pol polyproteins to the plasma membrane via a multipartite membrane-binding signal, that includes its myristointegration complex. The myristoylation signal and the NLS exert conflicting influences its subcellular localization. The key regulation of these motifs might be phosphorylation of a portion of MA molecules on the C-terminal tyrosine at the time of virus maturation, by virion-associated cellular tyrosine kinase. Implicated in the release from host cell mediated by Vpu. In terms of biological role, capsid protein p24 forms the conical core that encapsulates the genomic RNA-nucleocapsid complex in the virion. The core is constituted by capsid protein hexamer subunits. The core is disassembled soon after virion entry. Interaction with host PPIA/CYPA protects the virus from restriction by host TRIM5-alpha and from an unknown antiviral activity in host cells. This capsid restriction by TRIM5 is one of the factors which restricts SIV to the simian species. Nucleocapsid protein p7 encapsulates and protects viral dimeric unspliced (genomic) RNA. Binds these RNAs through its zinc fingers. Facilitates rearangement of nucleic acid secondary structure during retrotranscription of genomic RNA. This capability is referred to as nucleic acid chaperone activity. Its function is as follows. The aspartyl protease mediates proteolytic cleavages of Gag and Gag-Pol polyproteins during or shortly after the release of the virion from the plasma membrane. Cleavages take place as an ordered, step-wise cascade to yield mature proteins. This process is called maturation. Displays maximal activity during the budding process just prior to particle release from the cell. Also cleaves Nef and Vif, probably concomitantly with viral structural proteins on maturation of virus particles. Hydrolyzes host EIF4GI and PABP1 in order to shut off the capped cellular mRNA translation. The resulting inhibition of cellular protein synthesis serves to ensure maximal viral gene expression and to evade host immune response. Functionally, reverse transcriptase/ribonuclease H (RT) is a multifunctional enzyme that converts the viral dimeric RNA genome into dsDNA in the cytoplasm, shortly after virus entry into the cell. This enzyme displays a DNA polymerase activity that can copy either DNA or RNA templates, and a ribonuclease H (RNase H) activity that cleaves the RNA strand of RNA-DNA heteroduplexes in a partially processive 3' to 5' endonucleasic mode. Conversion of viral genomic RNA into dsDNA requires many steps. A tRNA binds to the primer-binding site (PBS) situated at the 5'-end of the viral RNA. RT uses the 3' end of the tRNA primer to perform a short round of RNA-dependent minus-strand DNA synthesis. The reading proceeds through the U5 region and ends after the repeated (R) region which is present at both ends of viral RNA. The portion of the RNA-DNA heteroduplex is digested by the RNase H, resulting in a ssDNA product attached to the tRNA primer. This ssDNA/tRNA hybridizes with the identical R region situated at the 3' end of viral RNA. This template exchange, known as minus-strand DNA strong stop transfer, can be either intra- or intermolecular. RT uses the 3' end of this newly synthesized short ssDNA to perform the RNA-dependent minus-strand DNA synthesis of the whole template. RNase H digests the RNA template except for two polypurine tracts (PPTs) situated at the 5'-end and near the center of the genome. It is not clear if both polymerase and RNase H activities are simultaneous. RNase H can probably proceed both in a polymerase-dependent (RNA cut into small fragments by the same RT performing DNA synthesis) and a polymerase-independent mode (cleavage of remaining RNA fragments by free RTs). Secondly, RT performs DNA-directed plus-strand DNA synthesis using the PPTs that have not been removed by RNase H as primers. PPTs and tRNA primers are then removed by RNase H. The 3' and 5' ssDNA PBS regions hybridize to form a circular dsDNA intermediate. Strand displacement synthesis by RT to the PBS and PPT ends produces a blunt ended, linear dsDNA copy of the viral genome that includes long terminal repeats (LTRs) at both ends. In terms of biological role, integrase catalyzes viral DNA integration into the host chromosome, by performing a series of DNA cutting and joining reactions. This enzyme activity takes place after virion entry into a cell and reverse transcription of the RNA genome in dsDNA. The first step in the integration process is 3' processing. This step requires a complex comprising the viral genome, matrix protein, Vpr and integrase. This complex is called the pre-integration complex (PIC). The integrase protein removes 2 nucleotides from each 3' end of the viral DNA, leaving recessed CA OH's at the 3' ends. In the second step, the PIC enters cell nucleus. This process is mediated through integrase and Vpr proteins, and allows the virus to infect a non dividing cell. This ability to enter the nucleus is specific of lentiviruses, other retroviruses cannot and rely on cell division to access cell chromosomes. In the third step, termed strand transfer, the integrase protein joins the previously processed 3' ends to the 5' ends of strands of target cellular DNA at the site of integration. The 5'-ends are produced by integrase-catalyzed staggered cuts, 5 bp apart. A Y-shaped, gapped, recombination intermediate results, with the 5'-ends of the viral DNA strands and the 3' ends of target DNA strands remaining unjoined, flanking a gap of 5 bp. The last step is viral DNA integration into host chromosome. This involves host DNA repair synthesis in which the 5 bp gaps between the unjoined strands are filled in and then ligated. Since this process occurs at both cuts flanking the SIV genome, a 5 bp duplication of host DNA is produced at the ends of SIV integration. Alternatively, Integrase may catalyze the excision of viral DNA just after strand transfer, this is termed disintegration. This is Gag-Pol polyprotein (gag-pol) from Pan troglodytes (Chimpanzee).